We begin with the raw amino-acid sequence, 302 residues long: Pantothenate synthetase 4 (302 aa).

51 to 58 (MGALHEGH) is an ATP binding site. His-58 serves as the catalytic Proton donor. Residue Gln-82 coordinates (R)-pantoate. Residue Gln-82 participates in beta-alanine binding. 166-169 (GRKD) contributes to the ATP binding site. A (R)-pantoate-binding site is contributed by Gln-172. ATP contacts are provided by residues Ala-195 and 203 to 206 (RSSR).

The protein belongs to the pantothenate synthetase family. Homodimer.

Its subcellular location is the cytoplasm. The catalysed reaction is (R)-pantoate + beta-alanine + ATP = (R)-pantothenate + AMP + diphosphate + H(+). Its pathway is cofactor biosynthesis; (R)-pantothenate biosynthesis; (R)-pantothenate from (R)-pantoate and beta-alanine: step 1/1. In terms of biological role, catalyzes the condensation of pantoate with beta-alanine in an ATP-dependent reaction via a pantoyl-adenylate intermediate. The polypeptide is Pantothenate synthetase 4 (Frankia alni (strain DSM 45986 / CECT 9034 / ACN14a)).